The primary structure comprises 674 residues: MNGQTPTDGGILYDATETDDEDDLVEVTEAERPAPAIGWAESLPEAAGLKGAELIQAFVKRLPNGPGVYRMLNEAGDVLYVGKARSLKKRVSNYAQGRGHSNRIARMVRETAHMEFVTTRTEIEALLLEANLIKRLRPRFNVLLRDDKSFPYIVVTGDTRAPALYKHRGARSRKGDYFGPFASAGAVGRTINSLQRAFLLRTCTDSVFETRTRPCLLYQIKRCSAPCTNEVSDADYAELVSEAKDFLSGKSQAVKATIASAMAEASENLDFERAALYRDRLAALSHVQSHQGINPAGVEEADVFATHHEGGISCIQVFFFRTGQNWGNRAYFPKADPSIPPAEVLSAFLAQFYDDKPCPRQVLLCAPVEEQELLAQALSEKSGYKVSILVPQRGEKKDLVEHALANAREAHGRKLAETASQGRLLEGFAATFQLPYVPRRIEIYDNSHIMGTNAVGGMVVAGPEGFVKGQYRKFNIKSTDITPGDDFGMMREVMTRRFSRLLKEEGKPDRSAEPGEDAGFPAWPDVILIDGGQGQMTAVRTILKELGIEDCVTAIGVAKGVDRDAGRERFFAEGRESFTLPPRDPVLYFIQRLRDEAHRFAIGSHRARRKKEMVKNPLDEIAGIGPTRKRALLTHFGTAKAVSRAGINDLMSVNGISETVARIVYEHFHEDAAK.

The GIY-YIG domain occupies 64 to 142 (NGPGVYRMLN…IKRLRPRFNV (79 aa)). In terms of domain architecture, UVR spans 252–287 (QAVKATIASAMAEASENLDFERAALYRDRLAALSHV).

Belongs to the UvrC family. Interacts with UvrB in an incision complex.

It is found in the cytoplasm. The UvrABC repair system catalyzes the recognition and processing of DNA lesions. UvrC both incises the 5' and 3' sides of the lesion. The N-terminal half is responsible for the 3' incision and the C-terminal half is responsible for the 5' incision. The protein is UvrABC system protein C of Rhizobium meliloti (strain 1021) (Ensifer meliloti).